The primary structure comprises 411 residues: Putative competence-damage inducible protein (411 aa).

This sequence belongs to the CinA family.

The chain is Putative competence-damage inducible protein from Caldicellulosiruptor saccharolyticus (strain ATCC 43494 / DSM 8903 / Tp8T 6331).